Consider the following 242-residue polypeptide: 1-(5-phosphoribosyl)-5-[(5-phosphoribosylamino)methylideneamino] imidazole-4-carboxamide isomerase (242 aa).

Asp8 functions as the Proton acceptor in the catalytic mechanism. Asp129 serves as the catalytic Proton donor.

This sequence belongs to the HisA/HisF family.

Its subcellular location is the cytoplasm. It carries out the reaction 1-(5-phospho-beta-D-ribosyl)-5-[(5-phospho-beta-D-ribosylamino)methylideneamino]imidazole-4-carboxamide = 5-[(5-phospho-1-deoxy-D-ribulos-1-ylimino)methylamino]-1-(5-phospho-beta-D-ribosyl)imidazole-4-carboxamide. It participates in amino-acid biosynthesis; L-histidine biosynthesis; L-histidine from 5-phospho-alpha-D-ribose 1-diphosphate: step 4/9. The sequence is that of 1-(5-phosphoribosyl)-5-[(5-phosphoribosylamino)methylideneamino] imidazole-4-carboxamide isomerase from Dictyoglomus thermophilum (strain ATCC 35947 / DSM 3960 / H-6-12).